A 611-amino-acid chain; its full sequence is Protein KINASE OF THE OUTER CHLOROPLAST MEMBRANE 1 (611 aa).

Topologically, residues 1 to 555 are cytoplasmic; sequence MASKIIAGKP…LEDFHWAVRP (555 aa). Residues 39–306 form the Protein kinase domain; the sequence is LKLRHRIGRG…TDILLVLKSL (268 aa). ATP contacts are provided by residues 45–53 and Lys74; that span reads IGRGPFGDV. The chain crosses the membrane as a helical span at residues 556-572; that stretch reads LLIAMGLLTAMKLGICV. Residues 573–611 are Chloroplast intermembrane-facing; the sequence is RKKIGRSKDGKQRDGSTGQGDCKIPDGKGSDKSKWLVFF. The tract at residues 579 to 606 is disordered; that stretch reads SKDGKQRDGSTGQGDCKIPDGKGSDKSK. Positions 595-606 are enriched in basic and acidic residues; the sequence is KIPDGKGSDKSK.

It belongs to the protein kinase superfamily. Ser/Thr protein kinase family. As to quaternary structure, associates with the TOC complex containing, at least, translocons at the chloroplast envelope (e.g. TOCs and TICs such as TOC159, TOC75, TOC33 and TIC56).

It is found in the plastid. The protein resides in the chloroplast outer membrane. It catalyses the reaction L-seryl-[protein] + ATP = O-phospho-L-seryl-[protein] + ADP + H(+). The enzyme catalyses L-threonyl-[protein] + ATP = O-phospho-L-threonyl-[protein] + ADP + H(+). Serine/threonine protein kinase acting as a regulatory component of the plastid protein import machinery by phosphorylating import receptors (e.g. the A-domain of TOC159, TOC120 and TOC132). Supports preprotein import and contributes to efficient chloroplast biogenesis, thus being required for survival during de-etiolation. The polypeptide is Protein KINASE OF THE OUTER CHLOROPLAST MEMBRANE 1 (Arabidopsis thaliana (Mouse-ear cress)).